Here is a 571-residue protein sequence, read N- to C-terminus: Peptide-N4-(N-acetyl-beta-glucosaminyl)asparagine amidase A (571 aa).

Asn-121, Asn-143, Asn-197, Asn-241, Asn-318, Asn-367, Asn-390, Asn-423, Asn-457, Asn-481, Asn-524, and Asn-529 each carry an N-linked (GlcNAc...) asparagine glycan.

As to quaternary structure, heterodimer of a large and a small chain. In terms of processing, is highly glycosylated and is largly resistant against self-deglycosylation.

It carries out the reaction Hydrolysis of an N(4)-(acetyl-beta-D-glucosaminyl)asparagine residue in which the glucosamine residue may be further glycosylated, to yield a (substituted) N-acetyl-beta-D-glucosaminylamine and a peptide containing an aspartate residue.. The polypeptide is Peptide-N4-(N-acetyl-beta-glucosaminyl)asparagine amidase A (Prunus dulcis (Almond)).